The sequence spans 318 residues: Protein-L-histidine N-pros-methyltransferase (318 aa).

An N-terminal signal peptide occupies residues 1 to 18 (MRLLAGWLCLSLASVWLA). Asn35 carries N-linked (GlcNAc...) asparagine glycosylation. Glu174, Asn210, and Tyr295 together coordinate S-adenosyl-L-homocysteine.

The protein belongs to the METTL9 family.

The protein resides in the endoplasmic reticulum. It is found in the mitochondrion. It catalyses the reaction L-histidyl-[protein] + S-adenosyl-L-methionine = N(pros)-methyl-L-histidyl-[protein] + S-adenosyl-L-homocysteine + H(+). Functionally, protein-histidine N-methyltransferase that specifically catalyzes 1-methylhistidine (pros-methylhistidine) methylation of target proteins. Specifically methylates the second His of proteins with a His-x-His (HxH) motif (where 'x' is preferably a small amino acid), while exploiting the first one as a recognition signature. Catalyzes methylation of target proteins such as S100A9, NDUFB3, SLC39A5, SLC39A7, ARMC6 and DNAJB12; 1-methylhistidine modification may affect the binding of zinc and other metals to its target proteins. Constitutes the main methyltransferase for the 1-methylhistidine modification in cell. This is Protein-L-histidine N-pros-methyltransferase from Homo sapiens (Human).